The following is a 446-amino-acid chain: MNQPNPNKQPIVQSTSEQTSNEEVDTVLGRFTLFVKDLSNGLNGSQEVPPSQESVSEEAEVISRKIIVLGQTFDNFDNANDYIESKLWLSYRCGFEPIPKSIDGPQPIQFFPSIIFNRSTIYSNFANLKSLFDKENFTSDAGWGCMIRTSQNLLANTLLKLYPKNEPEIVKLFQDDTSSPFSIHNFIRVASLSPLHVKPGEWFGPNAASLSIKRLASELLQDQEIDGIKIPRVFISENSDLFDDEIRDVFAKEKNASVLILFPIRLGIDKVNSYYYNSIFHLLASKYSCGIAGGKPSSSFYFLGYEDTDLIYFDPHLPQVVETPINMDSYHTTNYNRLNISLLDPSMMIGILVTNIDEYIDFKTSCLDINNKIVHFHPHTLPVQQDSIINQSWEEVQDEEEEFINLNVSKIENEQQQEQGQSTDAPDEFIDIGNQSSSVVSVPSNV.

Over residues 1–19 the composition is skewed to polar residues; the sequence is MNQPNPNKQPIVQSTSEQT. Residues 1–23 are disordered; that stretch reads MNQPNPNKQPIVQSTSEQTSNEE. Cys145 functions as the Nucleophile in the catalytic mechanism. Residues Asp314 and His316 contribute to the active site. Polar residues predominate over residues 412–424; it reads ENEQQQEQGQSTD. A disordered region spans residues 412–446; it reads ENEQQQEQGQSTDAPDEFIDIGNQSSSVVSVPSNV. A compositionally biased stretch (low complexity) spans 436-446; the sequence is SSSVVSVPSNV.

Belongs to the peptidase C54 family.

The protein localises to the cytoplasm. It is found in the nucleus. Its subcellular location is the preautophagosomal structure. The enzyme catalyses [protein]-C-terminal L-amino acid-glycyl-phosphatidylethanolamide + H2O = [protein]-C-terminal L-amino acid-glycine + a 1,2-diacyl-sn-glycero-3-phosphoethanolamine. Its function is as follows. Cysteine protease that plays a key role in cytoplasm to vacuole transport (Cvt) and autophagy by mediating both proteolytic activation and delipidation of ATG8. Required for selective autophagic degradation of the nucleus (nucleophagy) as well as for mitophagy which contributes to regulate mitochondrial quantity and quality by eliminating the mitochondria to a basal level to fulfill cellular energy requirements and preventing excess ROS production. The protease activity is required for proteolytic activation of ATG8: cleaves the C-terminal amino acid of ATG8 to reveal a C-terminal glycine. ATG8 ubiquitin-like activity requires the exposure of the glycine at the C-terminus for its conjugation to phosphatidylethanolamine (PE) and its insertion to membranes, which is necessary for autophagy. The ATG8-PE conjugate mediates tethering between adjacent membranes and stimulates membrane hemifusion, leading to expansion of the autophagosomal membrane during autophagy. In addition to the protease activity, also catalyzes deconjugation of PE-conjugated forms of ATG8 during macroautophagy: ATG8 delipidation is required to release the protein from membranes, which facilitates multiple events during macroautophagy, and especially for efficient autophagosome biogenesis, the assembly of ATG9-containing tubulovesicular clusters into phagophores/autophagosomes, and for the disassembly of PAS-associated ATG components. ATG8 delipidation by ATG4 also recycles ATG8-PE generated on inappropriate membranes to maintain a reservoir of unlipidated ATG8 that is required for autophagosome formation at the PAS. The polypeptide is Cysteine protease ATG4 (ATG4) (Candida albicans (strain SC5314 / ATCC MYA-2876) (Yeast)).